Consider the following 291-residue polypeptide: Tryptophan 2,3-dioxygenase (291 aa).

Residues Phe51–His55, Tyr113, and Arg117 each bind substrate. Residue His240 coordinates heme. Residue Thr254 participates in substrate binding.

Belongs to the tryptophan 2,3-dioxygenase family. In terms of assembly, homotetramer. Heme serves as cofactor.

It catalyses the reaction L-tryptophan + O2 = N-formyl-L-kynurenine. It functions in the pathway amino-acid degradation; L-tryptophan degradation via kynurenine pathway; L-kynurenine from L-tryptophan: step 1/2. Functionally, heme-dependent dioxygenase that catalyzes the oxidative cleavage of the L-tryptophan (L-Trp) pyrrole ring and converts L-tryptophan to N-formyl-L-kynurenine. Catalyzes the oxidative cleavage of the indole moiety. This Myxococcus xanthus (strain DK1622) protein is Tryptophan 2,3-dioxygenase.